Consider the following 436-residue polypeptide: ATP-dependent 6-phosphofructokinase (436 aa).

Residues Gly90, 155 to 156 (RG), and 180 to 183 (GDGT) each bind ATP. Residue Asp181 coordinates Mg(2+). Residues 209–211 (TID), 254–256 (MGR), Glu307, and 362–365 (YMIR) contribute to the substrate site. Asp211 serves as the catalytic Proton acceptor.

This sequence belongs to the phosphofructokinase type A (PFKA) family. PPi-dependent PFK group II subfamily. Atypical ATP-dependent clade 'X' sub-subfamily. As to quaternary structure, homodimer. Aggregates to a homotetramer after activation by ATP. Mg(2+) is required as a cofactor.

It is found in the cytoplasm. It catalyses the reaction beta-D-fructose 6-phosphate + ATP = beta-D-fructose 1,6-bisphosphate + ADP + H(+). It functions in the pathway carbohydrate degradation; glycolysis; D-glyceraldehyde 3-phosphate and glycerone phosphate from D-glucose: step 3/4. Activated by nucleoside triphosphates. Inhibited by phosphoenolpyruvate. EDTA and biphosphonates play the role of inhibitors of kinase activity. Catalyzes the phosphorylation of D-fructose 6-phosphate to fructose 1,6-bisphosphate by ATP, the first committing step of glycolysis. This Entamoeba histolytica (strain ATCC 30459 / HM-1:IMSS / ABRM) protein is ATP-dependent 6-phosphofructokinase (PPi-PFK).